The following is a 110-amino-acid chain: Large ribosomal subunit protein uL24 (110 aa).

Belongs to the universal ribosomal protein uL24 family. Part of the 50S ribosomal subunit.

One of two assembly initiator proteins, it binds directly to the 5'-end of the 23S rRNA, where it nucleates assembly of the 50S subunit. Its function is as follows. One of the proteins that surrounds the polypeptide exit tunnel on the outside of the subunit. The polypeptide is Large ribosomal subunit protein uL24 (Caldicellulosiruptor saccharolyticus (strain ATCC 43494 / DSM 8903 / Tp8T 6331)).